We begin with the raw amino-acid sequence, 157 residues long: Peptide methionine sulfoxide reductase MsrA (157 aa).

The active site involves cysteine 10.

The protein belongs to the MsrA Met sulfoxide reductase family.

The catalysed reaction is L-methionyl-[protein] + [thioredoxin]-disulfide + H2O = L-methionyl-(S)-S-oxide-[protein] + [thioredoxin]-dithiol. It carries out the reaction [thioredoxin]-disulfide + L-methionine + H2O = L-methionine (S)-S-oxide + [thioredoxin]-dithiol. Has an important function as a repair enzyme for proteins that have been inactivated by oxidation. Catalyzes the reversible oxidation-reduction of methionine sulfoxide in proteins to methionine. The sequence is that of Peptide methionine sulfoxide reductase MsrA from Clostridium botulinum (strain Kyoto / Type A2).